A 416-amino-acid polypeptide reads, in one-letter code: Serine hydroxymethyltransferase (416 aa).

(6S)-5,6,7,8-tetrahydrofolate-binding positions include Leu-118 and 122-124 (GHL). Lys-226 is subject to N6-(pyridoxal phosphate)lysine. Residues Glu-242 and 350 to 352 (SPF) contribute to the (6S)-5,6,7,8-tetrahydrofolate site.

It belongs to the SHMT family. In terms of assembly, homodimer. It depends on pyridoxal 5'-phosphate as a cofactor.

The protein localises to the cytoplasm. The enzyme catalyses (6R)-5,10-methylene-5,6,7,8-tetrahydrofolate + glycine + H2O = (6S)-5,6,7,8-tetrahydrofolate + L-serine. It participates in one-carbon metabolism; tetrahydrofolate interconversion. It functions in the pathway amino-acid biosynthesis; glycine biosynthesis; glycine from L-serine: step 1/1. Its function is as follows. Catalyzes the reversible interconversion of serine and glycine with tetrahydrofolate (THF) serving as the one-carbon carrier. This reaction serves as the major source of one-carbon groups required for the biosynthesis of purines, thymidylate, methionine, and other important biomolecules. Also exhibits THF-independent aldolase activity toward beta-hydroxyamino acids, producing glycine and aldehydes, via a retro-aldol mechanism. In Helicobacter pylori (strain ATCC 700392 / 26695) (Campylobacter pylori), this protein is Serine hydroxymethyltransferase.